Reading from the N-terminus, the 233-residue chain is Orotidine 5'-phosphate decarboxylase (233 aa).

Substrate contacts are provided by residues D11, K34, D61–T70, T117, R179, Q188, G208, and R209. Catalysis depends on K63, which acts as the Proton donor.

It belongs to the OMP decarboxylase family. Type 1 subfamily. As to quaternary structure, homodimer.

It carries out the reaction orotidine 5'-phosphate + H(+) = UMP + CO2. It participates in pyrimidine metabolism; UMP biosynthesis via de novo pathway; UMP from orotate: step 2/2. In terms of biological role, catalyzes the decarboxylation of orotidine 5'-monophosphate (OMP) to uridine 5'-monophosphate (UMP). The polypeptide is Orotidine 5'-phosphate decarboxylase (Streptococcus pneumoniae (strain Hungary19A-6)).